Consider the following 217-residue polypeptide: Probable transaldolase (217 aa).

The active-site Schiff-base intermediate with substrate is Lys83.

It belongs to the transaldolase family. Type 3B subfamily.

It localises to the cytoplasm. The enzyme catalyses D-sedoheptulose 7-phosphate + D-glyceraldehyde 3-phosphate = D-erythrose 4-phosphate + beta-D-fructose 6-phosphate. It functions in the pathway carbohydrate degradation; pentose phosphate pathway; D-glyceraldehyde 3-phosphate and beta-D-fructose 6-phosphate from D-ribose 5-phosphate and D-xylulose 5-phosphate (non-oxidative stage): step 2/3. In terms of biological role, transaldolase is important for the balance of metabolites in the pentose-phosphate pathway. The chain is Probable transaldolase from Brucella melitensis biotype 1 (strain ATCC 23456 / CCUG 17765 / NCTC 10094 / 16M).